Reading from the N-terminus, the 243-residue chain is Probable phosphatase CLD_1129 (243 aa).

Zn(2+) is bound by residues His8, His10, His16, His41, Glu74, His102, His132, Asp192, and His194.

This sequence belongs to the PHP family. Requires Zn(2+) as cofactor.

This Clostridium botulinum (strain Okra / Type B1) protein is Probable phosphatase CLD_1129.